The sequence spans 389 residues: MGRVKLKIKRLESTSNRQVTYTKRKNGILKKAKELSILCDIDIVLLMFSPTGRATAFHGEHSCIEEVISKFAQLTPQERTKRKLESLEALKKTFKKLDHDVNIHDFLGARNQTIEGLSNQVAIYQAQLMECHRRLSCWTNIDRIENTEHLDLLEESLRKSIERIQIHKEHYRKNQLLPIECATTQFHSGIQLPMAMGGNSSMQEAHSMSWLPDNDHQQTILPGDSSFLPHREMDGSIPVYSSCFFESTKPEDQICSNPGQQFEQLEQQGNGCLGLQQLGEEYSYPTPFGTTLGMEEDQEKKIKSEMELNNLQQQQQQQQQQQQQDPSMYDPMANNNGGCFQIPHDQSMFVNDHHHHHHHHHQNWVPDSMFGQTSYNQVCVFTPPLELSR.

The MADS-box domain maps to Met-1–His-61. Coiled-coil stretches lie at residues Gln-77–Cys-131 and Gly-293–Asp-325. Residues Asn-310–Pro-343 are disordered. Residues Gln-312 to Gln-324 are compositionally biased toward low complexity.

As to quaternary structure, forms a heterodimer with AGL104. As to expression, expressed in pollen.

It localises to the nucleus. Probable transcription factor that forms a heterodimer with the MADS-box protein AGL104 and is involved in the regulation of pollen maturation at the late stages of pollen development and pollen tube growth. In Arabidopsis thaliana (Mouse-ear cress), this protein is Agamous-like MADS-box protein AGL65.